The sequence spans 51 residues: Kunitz-like toxin PcKuz3 (51 aa).

Intrachain disulfides connect Cys-1–Cys-51, Cys-10–Cys-34, and Cys-26–Cys-47.

It belongs to the venom Kunitz-type family. Sea anemone type 2 potassium channel toxin subfamily.

Its subcellular location is the secreted. It is found in the nematocyst. Its function is as follows. Potent toxin and weak serine protease inhibitor that displays activity on both trypsin and elastase. May act as a neurotoxin by blocking voltage-gated potassium channels (Kv1.1/KCNA1 and Kv1.2/KCNA2). Has a neuroprotective effect, since it suppress, at low concentration, the 6-hydroxydopamine-induced neurotoxicity on the locomotive behavior of zebrafish. In vivo, has strong reversible antilocomotor activity. In addition, it is lethal to zebrafish larvae at high doses. The polypeptide is Kunitz-like toxin PcKuz3 (Palythoa caribaeorum (White encrusting zoanthid coral)).